Consider the following 860-residue polypeptide: Valine--tRNA ligase (860 aa).

The 'HIGH' region signature appears at 43 to 53 (PTVSGALHVGH). Residues 469–491 (LPVDPSSDAPTGYQESQRNQPGG) form a disordered region. Residues 574-578 (KMSKS) carry the 'KMSKS' region motif. K577 contributes to the ATP binding site.

It belongs to the class-I aminoacyl-tRNA synthetase family. ValS type 2 subfamily. As to quaternary structure, monomer.

It is found in the cytoplasm. The catalysed reaction is tRNA(Val) + L-valine + ATP = L-valyl-tRNA(Val) + AMP + diphosphate. Its function is as follows. Catalyzes the attachment of valine to tRNA(Val). As ValRS can inadvertently accommodate and process structurally similar amino acids such as threonine, to avoid such errors, it has a 'posttransfer' editing activity that hydrolyzes mischarged Thr-tRNA(Val) in a tRNA-dependent manner. The protein is Valine--tRNA ligase of Salinispora tropica (strain ATCC BAA-916 / DSM 44818 / JCM 13857 / NBRC 105044 / CNB-440).